A 79-amino-acid polypeptide reads, in one-letter code: Small ribosomal subunit protein bS16 (79 aa).

The protein belongs to the bacterial ribosomal protein bS16 family.

The protein is Small ribosomal subunit protein bS16 of Oleidesulfovibrio alaskensis (strain ATCC BAA-1058 / DSM 17464 / G20) (Desulfovibrio alaskensis).